Consider the following 435-residue polypeptide: Serine carboxypeptidase-like 14 (435 aa).

Positions 1–23 are cleaved as a signal peptide; it reads MGSWIPKLLLLQLVLLLTKHADS. Intrachain disulfides connect cysteine 82-cysteine 325, cysteine 246-cysteine 260, and cysteine 284-cysteine 291. N-linked (GlcNAc...) asparagine glycosylation occurs at asparagine 103. Serine 178 is a catalytic residue. Asparagine 344 carries an N-linked (GlcNAc...) asparagine glycan. Residue aspartate 360 is part of the active site. Asparagine 376 carries N-linked (GlcNAc...) asparagine glycosylation. Residue histidine 413 is part of the active site.

This sequence belongs to the peptidase S10 family. Expressed in senescent leaves.

The protein resides in the secreted. Its function is as follows. Probable carboxypeptidase. The chain is Serine carboxypeptidase-like 14 (SCPL14) from Arabidopsis thaliana (Mouse-ear cress).